A 169-amino-acid polypeptide reads, in one-letter code: Transcription antitermination protein NusB (169 aa).

A disordered region spans residues 1–23; that stretch reads MADSKKPAIKKPVPKGDRKANRR.

This sequence belongs to the NusB family.

Its function is as follows. Involved in transcription antitermination. Required for transcription of ribosomal RNA (rRNA) genes. Binds specifically to the boxA antiterminator sequence of the ribosomal RNA (rrn) operons. The sequence is that of Transcription antitermination protein NusB from Rhodopseudomonas palustris (strain HaA2).